The primary structure comprises 102 residues: Small ribosomal subunit protein uS10 (102 aa).

The protein belongs to the universal ribosomal protein uS10 family. As to quaternary structure, part of the 30S ribosomal subunit.

Its function is as follows. Involved in the binding of tRNA to the ribosomes. The chain is Small ribosomal subunit protein uS10 from Parvibaculum lavamentivorans (strain DS-1 / DSM 13023 / NCIMB 13966).